The sequence spans 705 residues: Phosphoribosylformylglycinamidine synthase subunit PurL (705 aa).

Residue histidine 32 is part of the active site. Tyrosine 35 provides a ligand contact to ATP. A Mg(2+)-binding site is contributed by glutamate 76. Residues 77 to 80 (SHNH) and arginine 99 each bind substrate. Histidine 78 (proton acceptor) is an active-site residue. Aspartate 100 is a binding site for Mg(2+). Glutamine 224 contacts substrate. Aspartate 252 is a binding site for Mg(2+). 296–298 (ESQ) provides a ligand contact to substrate. Positions 471 and 508 each coordinate ATP. Mg(2+) is bound at residue asparagine 509. Position 511 (serine 511) interacts with substrate.

The protein belongs to the FGAMS family. As to quaternary structure, monomer. Part of the FGAM synthase complex composed of 1 PurL, 1 PurQ and 2 PurS subunits.

The protein resides in the cytoplasm. The catalysed reaction is N(2)-formyl-N(1)-(5-phospho-beta-D-ribosyl)glycinamide + L-glutamine + ATP + H2O = 2-formamido-N(1)-(5-O-phospho-beta-D-ribosyl)acetamidine + L-glutamate + ADP + phosphate + H(+). The protein operates within purine metabolism; IMP biosynthesis via de novo pathway; 5-amino-1-(5-phospho-D-ribosyl)imidazole from N(2)-formyl-N(1)-(5-phospho-D-ribosyl)glycinamide: step 1/2. In terms of biological role, part of the phosphoribosylformylglycinamidine synthase complex involved in the purines biosynthetic pathway. Catalyzes the ATP-dependent conversion of formylglycinamide ribonucleotide (FGAR) and glutamine to yield formylglycinamidine ribonucleotide (FGAM) and glutamate. The FGAM synthase complex is composed of three subunits. PurQ produces an ammonia molecule by converting glutamine to glutamate. PurL transfers the ammonia molecule to FGAR to form FGAM in an ATP-dependent manner. PurS interacts with PurQ and PurL and is thought to assist in the transfer of the ammonia molecule from PurQ to PurL. The polypeptide is Phosphoribosylformylglycinamidine synthase subunit PurL (Pyrococcus horikoshii (strain ATCC 700860 / DSM 12428 / JCM 9974 / NBRC 100139 / OT-3)).